We begin with the raw amino-acid sequence, 863 residues long: Leucine--tRNA ligase (863 aa).

A 'HIGH' region motif is present at residues 42–52 (PYPSGKIHMGH). Residues 618 to 622 (KMSKS) carry the 'KMSKS' region motif. Lys-621 provides a ligand contact to ATP.

It belongs to the class-I aminoacyl-tRNA synthetase family.

Its subcellular location is the cytoplasm. It carries out the reaction tRNA(Leu) + L-leucine + ATP = L-leucyl-tRNA(Leu) + AMP + diphosphate. In Desulfatibacillum aliphaticivorans, this protein is Leucine--tRNA ligase.